The primary structure comprises 150 residues: 3-hydroxyacyl-[acyl-carrier-protein] dehydratase FabZ (150 aa).

His53 is an active-site residue.

The protein belongs to the thioester dehydratase family. FabZ subfamily.

Its subcellular location is the cytoplasm. The catalysed reaction is a (3R)-hydroxyacyl-[ACP] = a (2E)-enoyl-[ACP] + H2O. In terms of biological role, involved in unsaturated fatty acids biosynthesis. Catalyzes the dehydration of short chain beta-hydroxyacyl-ACPs and long chain saturated and unsaturated beta-hydroxyacyl-ACPs. In Photorhabdus laumondii subsp. laumondii (strain DSM 15139 / CIP 105565 / TT01) (Photorhabdus luminescens subsp. laumondii), this protein is 3-hydroxyacyl-[acyl-carrier-protein] dehydratase FabZ.